Consider the following 396-residue polypeptide: Elongation factor Tu (396 aa).

Residues Lys10 to Val205 enclose the tr-type G domain. The interval Gly19–Thr26 is G1. A GTP-binding site is contributed by Gly19 to Thr26. Thr26 is a binding site for Mg(2+). Residues Gly62–Asn66 are G2. The G3 stretch occupies residues Asp83–Gly86. Residues Asp83–His87 and Asn138–Asp141 contribute to the GTP site. The interval Asn138 to Asp141 is G4. The tract at residues Ser175–Leu177 is G5.

It belongs to the TRAFAC class translation factor GTPase superfamily. Classic translation factor GTPase family. EF-Tu/EF-1A subfamily. As to quaternary structure, monomer.

It localises to the cytoplasm. It carries out the reaction GTP + H2O = GDP + phosphate + H(+). GTP hydrolase that promotes the GTP-dependent binding of aminoacyl-tRNA to the A-site of ribosomes during protein biosynthesis. This is Elongation factor Tu from Mycobacterium avium (strain 104).